The following is a 308-amino-acid chain: Probable very-long-chain enoyl-CoA reductase art-1 (308 aa).

The Ubiquitin-like domain occupies 7 to 85 (VYDAKRTDNL…VLYVRDLGPQ (79 aa)). 4 helical membrane-spanning segments follow: residues 112–132 (FIYG…IAFF), 169–189 (WGFA…PPAF), 194–214 (VYFG…IHIL), and 255–275 (WIFF…TAGF).

It belongs to the steroid 5-alpha reductase family.

The protein localises to the endoplasmic reticulum membrane. It carries out the reaction a very-long-chain 2,3-saturated fatty acyl-CoA + NADP(+) = a very-long-chain (2E)-enoyl-CoA + NADPH + H(+). It functions in the pathway lipid metabolism; fatty acid biosynthesis. Functionally, catalyzes the last of the four reactions of the long-chain fatty acids elongation cycle. This endoplasmic reticulum-bound enzymatic process, allows the addition of 2 carbons to the chain of long- and very long-chain fatty acids/VLCFAs per cycle. This enzyme reduces the trans-2,3-enoyl-CoA fatty acid intermediate to an acyl-CoA that can be further elongated by entering a new cycle of elongation. Thereby, it participates in the production of VLCFAs of different chain lengths that are involved in multiple biological processes as precursors of membrane lipids and lipid mediators. In Caenorhabditis elegans, this protein is Probable very-long-chain enoyl-CoA reductase art-1 (art-1).